We begin with the raw amino-acid sequence, 282 residues long: Putative 4-diphosphocytidyl-2-C-methyl-D-erythritol kinase (282 aa).

Residue lysine 9 is part of the active site. 93 to 103 (PVSAGLAGGSA) is an ATP binding site. Aspartate 135 is a catalytic residue.

This sequence belongs to the GHMP kinase family. IspE subfamily.

The catalysed reaction is 4-CDP-2-C-methyl-D-erythritol + ATP = 4-CDP-2-C-methyl-D-erythritol 2-phosphate + ADP + H(+). Catalyzes the phosphorylation of the position 2 hydroxy group of 4-diphosphocytidyl-2C-methyl-D-erythritol. The chain is Putative 4-diphosphocytidyl-2-C-methyl-D-erythritol kinase from Staphylococcus aureus (strain bovine RF122 / ET3-1).